Here is a 390-residue protein sequence, read N- to C-terminus: MALPLYLVGLSHKTAPLEVRERAALDPVVALPAALSALGKGVVLSTCNRTELYGVGSPEKARAFLLSRGVVPRHLYVKEGVEALRHLYRVAAGLDSLVVGEAQILGQVREALFLARRQGATESLLEKAFQSAIALGKRARSETGIGMGAVSVAYAALDLALAVYGDLSGLSVAVLGAGEMAELFLTHLKAHGVGRILVVNRTEEKAQALAERFGGEAFGLPALPQVLRQADLVVASAAAPHYLVGPEDLPKRAKPLFLIDIALPRNIDPRVGDLPHAYLYNLDDLKRVVDRNLRARAGEIPKVEALIEKALGDYMEWYAGHRVREAIRALEAWARVQAAKAQPEAGPVELEKAAGRLAHPFILGLKRRALDRVGGPPCPEDCLLYRLSRT.

Residues 46–49 (TCNR), S96, 101–103 (EAQ), and Q107 each bind substrate. Catalysis depends on C47, which acts as the Nucleophile. 176 to 181 (GAGEMA) contacts NADP(+).

The protein belongs to the glutamyl-tRNA reductase family. As to quaternary structure, homodimer.

It catalyses the reaction (S)-4-amino-5-oxopentanoate + tRNA(Glu) + NADP(+) = L-glutamyl-tRNA(Glu) + NADPH + H(+). It participates in porphyrin-containing compound metabolism; protoporphyrin-IX biosynthesis; 5-aminolevulinate from L-glutamyl-tRNA(Glu): step 1/2. Catalyzes the NADPH-dependent reduction of glutamyl-tRNA(Glu) to glutamate 1-semialdehyde (GSA). The protein is Glutamyl-tRNA reductase of Thermus thermophilus (strain ATCC BAA-163 / DSM 7039 / HB27).